Consider the following 396-residue polypeptide: Putative F-box protein At4g22660 (396 aa).

Residues 7–58 (PNTWSDLPLDLLNLVFKRLSFANFRQAKSVCSSWYSASKQSVPKNQIPWLML) enclose the F-box domain.

The protein is Putative F-box protein At4g22660 of Arabidopsis thaliana (Mouse-ear cress).